The sequence spans 434 residues: UDP-N-acetylmuramoylalanine--D-glutamate ligase (434 aa).

G113–T119 contacts ATP.

It belongs to the MurCDEF family.

The protein localises to the cytoplasm. It catalyses the reaction UDP-N-acetyl-alpha-D-muramoyl-L-alanine + D-glutamate + ATP = UDP-N-acetyl-alpha-D-muramoyl-L-alanyl-D-glutamate + ADP + phosphate + H(+). It participates in cell wall biogenesis; peptidoglycan biosynthesis. In terms of biological role, cell wall formation. Catalyzes the addition of glutamate to the nucleotide precursor UDP-N-acetylmuramoyl-L-alanine (UMA). The protein is UDP-N-acetylmuramoylalanine--D-glutamate ligase of Pasteurella multocida (strain Pm70).